The primary structure comprises 65 residues: UPF0337 protein gbs1203 (65 aa).

The segment covering 1–12 has biased composition (basic and acidic residues); it reads MSEEKFDAKVDK. Residues 1–29 form a disordered region; the sequence is MSEEKFDAKVDKVSGSVKESVGKLTGDKE.

The protein belongs to the UPF0337 (CsbD) family.

The sequence is that of UPF0337 protein gbs1203 from Streptococcus agalactiae serotype III (strain NEM316).